The chain runs to 421 residues: Isocitrate dehydrogenase [NADP], mitochondrial (421 aa).

Residues 1–8 constitute a mitochondrion transit peptide; that stretch reads ARAAARHY. An N6-acetyllysine mark is found at lysine 14, lysine 17, lysine 36, and lysine 38. Lysine 49 and lysine 75 each carry N6-acetyllysine; alternate. An N6-succinyllysine; alternate mark is found at lysine 49 and lysine 75. Residues 84–86 and arginine 91 each bind NADP(+); that span reads TIT. D-threo-isocitrate is bound at residue threonine 86. D-threo-isocitrate is bound by residues 103-109 and arginine 118; that span reads SPNGTIR. Lysine 124 bears the N6-acetyllysine mark. Lysine 135 bears the N6-acetyllysine; alternate mark. Lysine 135 is subject to N6-succinyllysine; alternate. D-threo-isocitrate is bound at residue arginine 141. Residues lysine 149 and lysine 162 each carry the N6-acetyllysine; alternate modification. Residues lysine 149 and lysine 162 each carry the N6-succinyllysine; alternate modification. N6-acetyllysine is present on lysine 168. Lysine 225 bears the N6-acetyllysine; alternate mark. At lysine 225 the chain carries N6-succinyllysine; alternate. Lysine 232, lysine 241, lysine 244, and lysine 249 each carry N6-acetyllysine. Lysine 251 is modified (N6-acetyllysine; alternate). N6-succinyllysine; alternate is present on lysine 251. Aspartate 260 contributes to the Mn(2+) binding site. Lysine 268 is a binding site for NADP(+). Aspartate 283 is a Mn(2+) binding site. NADP(+) is bound by residues 318–323 and asparagine 336; that span reads GTVTRH. Residue lysine 353 is modified to N6-acetyllysine; alternate. Lysine 353 is modified (N6-succinyllysine; alternate). 3 positions are modified to N6-acetyllysine: lysine 369, lysine 382, and lysine 411.

This sequence belongs to the isocitrate and isopropylmalate dehydrogenases family. Homodimer. Mg(2+) is required as a cofactor. Mn(2+) serves as cofactor. Acetylation at Lys-382 dramatically reduces catalytic activity. Deacetylated by SIRT3.

It localises to the mitochondrion. It carries out the reaction D-threo-isocitrate + NADP(+) = 2-oxoglutarate + CO2 + NADPH. Plays a role in intermediary metabolism and energy production. It may tightly associate or interact with the pyruvate dehydrogenase complex. The protein is Isocitrate dehydrogenase [NADP], mitochondrial (IDH2) of Sus scrofa (Pig).